The sequence spans 121 residues: Putative membrane protein insertion efficiency factor (121 aa).

It belongs to the UPF0161 family.

It localises to the cell inner membrane. Could be involved in insertion of integral membrane proteins into the membrane. This chain is Putative membrane protein insertion efficiency factor, found in Rhodopseudomonas palustris (strain HaA2).